The following is a 75-amino-acid chain: uncharacterized protein (75 aa).

The N-terminal stretch at 1 to 21 (MRLIVVSIMVTLLSGCGSIIS) is a signal peptide.

To E.coli YidQ.

This is an uncharacterized protein from Escherichia coli O157:H7.